We begin with the raw amino-acid sequence, 446 residues long: Oxysterols receptor LXR-beta (446 aa).

The segment at M1–A69 is disordered. Residues M1–E76 are transactivation AF-1; required for ligand-independent transactivation function. Residues S17–T28 show a composition bias toward low complexity. Positions H75–S152 form a DNA-binding region, nuclear receptor. NR C4-type zinc fingers lie at residues C78–C98 and C116–C140. Residues K159–E201 form a disordered region. The segment covering P175–G196 has biased composition (low complexity). Residues L205–E446 are transactivation AF-2; required for ligand-dependent transactivation function; mediates interaction with CCAR2. The NR LBD domain occupies A208 to E446. Residues K395 and K433 each participate in a glycyl lysine isopeptide (Lys-Gly) (interchain with G-Cter in SUMO2) cross-link.

This sequence belongs to the nuclear hormone receptor family. NR1 subfamily. In terms of assembly, forms a heterodimer with RXR. Interacts with CCAR2 (via N-terminus) in a ligand-independent manner. Interacts (when sumoylated) with GPS2; interaction with GPS2 onto hepatic acute phase protein promoters prevents N-Cor corepressor complex dissociation. Interacts with ABCA12 and ABCA1; this interaction is required for ABCA1 localization to the cell surface and is necessary for its normal activity and stability. Sumoylated by SUMO2 at Lys-395 and Lys-433 during the hepatic acute phase response, leading to promote interaction with GPS2 and prevent N-Cor corepressor complex dissociation. In terms of tissue distribution, ubiquitous.

It is found in the nucleus. Nuclear receptor that exhibits a ligand-dependent transcriptional activation activity. Binds preferentially to double-stranded oligonucleotide direct repeats having the consensus half-site sequence 5'-AGGTCA-3' and 4-nt spacing (DR-4). Regulates cholesterol uptake through MYLIP-dependent ubiquitination of LDLR, VLDLR and LRP8; DLDLR and LRP8. Interplays functionally with RORA for the regulation of genes involved in liver metabolism. Induces LPCAT3-dependent phospholipid remodeling in endoplasmic reticulum (ER) membranes of hepatocytes, driving SREBF1 processing and lipogenesis. Via LPCAT3, triggers the incorporation of arachidonate into phosphatidylcholines of ER membranes, increasing membrane dynamics and enabling triacylglycerols transfer to nascent very low-density lipoprotein (VLDL) particles. Via LPCAT3 also counteracts lipid-induced ER stress response and inflammation, likely by modulating SRC kinase membrane compartmentalization and limiting the synthesis of lipid inflammatory mediators. Plays an anti-inflammatory role during the hepatic acute phase response by acting as a corepressor: inhibits the hepatic acute phase response by preventing dissociation of the N-Cor corepressor complex. This Mus musculus (Mouse) protein is Oxysterols receptor LXR-beta (Nr1h2).